Consider the following 397-residue polypeptide: Tryptophan synthase beta chain (397 aa).

Residue Lys86 is modified to N6-(pyridoxal phosphate)lysine.

Belongs to the TrpB family. As to quaternary structure, tetramer of two alpha and two beta chains. Pyridoxal 5'-phosphate is required as a cofactor.

The enzyme catalyses (1S,2R)-1-C-(indol-3-yl)glycerol 3-phosphate + L-serine = D-glyceraldehyde 3-phosphate + L-tryptophan + H2O. It participates in amino-acid biosynthesis; L-tryptophan biosynthesis; L-tryptophan from chorismate: step 5/5. Its function is as follows. The beta subunit is responsible for the synthesis of L-tryptophan from indole and L-serine. The protein is Tryptophan synthase beta chain of Tolumonas auensis (strain DSM 9187 / NBRC 110442 / TA 4).